Consider the following 207-residue polypeptide: Small ribosomal subunit protein uS4 (207 aa).

Residues Asp30 to Asp51 are disordered. The region spanning Ser97–Ala157 is the S4 RNA-binding domain.

This sequence belongs to the universal ribosomal protein uS4 family. Part of the 30S ribosomal subunit. Contacts protein S5. The interaction surface between S4 and S5 is involved in control of translational fidelity.

In terms of biological role, one of the primary rRNA binding proteins, it binds directly to 16S rRNA where it nucleates assembly of the body of the 30S subunit. Its function is as follows. With S5 and S12 plays an important role in translational accuracy. The sequence is that of Small ribosomal subunit protein uS4 from Verminephrobacter eiseniae (strain EF01-2).